The sequence spans 37 residues: Esculentin-2A (37 aa).

A disulfide bridge links Cys31 with Cys37.

It belongs to the frog skin active peptide (FSAP) family. Esculentin subfamily. In terms of tissue distribution, expressed by the skin glands.

It localises to the secreted. Its function is as follows. Shows antibacterial activity against representative Gram-negative and Gram-positive bacterial species, and hemolytic activity. The sequence is that of Esculentin-2A from Pelophylax lessonae (Pool frog).